A 99-amino-acid chain; its full sequence is Small ribosomal subunit protein uS17 (99 aa).

The protein belongs to the universal ribosomal protein uS17 family. Part of the 30S ribosomal subunit.

One of the primary rRNA binding proteins, it binds specifically to the 5'-end of 16S ribosomal RNA. In Thermosipho africanus (strain TCF52B), this protein is Small ribosomal subunit protein uS17.